The chain runs to 352 residues: MTIAIGRAPAERGWFDILDDWLKRDRFVFVGWSGILLFPCAYLALGGWLTGTTFVTSWYTHGLASSYLEGCNFLTVAVSTPANSMGHSLLLLWGPEAQGDFTRWCQLGGLWTFIALHGAFGLIGFMLRQFEIARLVGVRPYNAIAFSAPIAVFVSVFLIYPLGQSSWFFAPSFGVAAIFRFLLFFQGFHNWTLNPFHMMGVAGVLGGALLCAIHGATVENTLFQDGEGASTFRAFNPTQAEETYSMVTANRFWSQIFGIAFSNKRWLHFFMLFVPVTGLWMSAIGVVGLALNLRSYDFISQEIRAAEDPEFETFYTKNLLLNEGIRAWMAPQDQPHENFVFPEEVLPRGNAL.

Over Met-1–Gly-31 the chain is Cytoplasmic. The helical transmembrane segment at Trp-32–Thr-53 threads the bilayer. Residues Phe-54–Gly-108 lie on the Lumenal side of the membrane. The helical transmembrane segment at Gly-109–Glu-131 threads the bilayer. His-117 is a binding site for chlorophyll a. Residue Gln-129 participates in pheophytin a binding. Residues Ile-132–Pro-140 are Cytoplasmic-facing. Residues Tyr-141–Tyr-160 traverse the membrane as a helical segment. Asn-142 serves as a coordination point for pheophytin a. The Lumenal segment spans residues Pro-161 to Leu-193. The helical transmembrane segment at Asn-194–Thr-217 threads the bilayer. His-197 contributes to the chlorophyll a binding site. Residues His-214 and Phe-261 each contribute to the a plastoquinone site. Position 214 (His-214) interacts with Fe cation. Over Val-218–Arg-265 the chain is Cytoplasmic. Residues Trp-266 to Gly-288 traverse the membrane as a helical segment. His-268 lines the Fe cation pocket. At Leu-289–Leu-352 the chain is on the lumenal side.

The protein belongs to the reaction center PufL/M/PsbA/D family. PSII is composed of 1 copy each of membrane proteins PsbA, PsbB, PsbC, PsbD, PsbE, PsbF, PsbH, PsbI, PsbJ, PsbK, PsbL, PsbM, PsbT, PsbX, PsbY, PsbZ, Psb30/Ycf12, peripheral proteins PsbO, CyanoQ (PsbQ), PsbU, PsbV and a large number of cofactors. It forms dimeric complexes. Part of a photosystem II (PSII) assembly intermediate complex PSII-I; crystallized from a strain deleted of psbJ, it forms monomeric PSII before addition of the oxygen evolving complex. PSII-I includes 3 assembly factors not found in mature PSII (Psb27, Psb28 and Psb34). The D1/D2 heterodimer binds P680, chlorophylls that are the primary electron donor of PSII, and subsequent electron acceptors. It shares a non-heme iron and each subunit binds pheophytin, quinone, additional chlorophylls, carotenoids and lipids. There is also a Cl(-1) ion associated with D1 and D2, which is required for oxygen evolution. PSII binds additional chlorophylls, carotenoids and specific lipids. serves as cofactor.

It is found in the cellular thylakoid membrane. It catalyses the reaction 2 a plastoquinone + 4 hnu + 2 H2O = 2 a plastoquinol + O2. Photosystem II (PSII) is a light-driven water:plastoquinone oxidoreductase that uses light energy to abstract electrons from H(2)O, generating O(2) and a proton gradient subsequently used for ATP formation. It consists of a core antenna complex that captures photons, and an electron transfer chain that converts photonic excitation into a charge separation. The D1/D2 (PsbA/PsbD) reaction center heterodimer binds P680, the primary electron donor of PSII as well as several subsequent electron acceptors. D2 is needed for assembly of a stable PSII complex. The protein is Photosystem II D2 protein of Thermosynechococcus vestitus (strain NIES-2133 / IAM M-273 / BP-1).